A 285-amino-acid polypeptide reads, in one-letter code: Bifunctional protein FolD (285 aa).

NADP(+) contacts are provided by residues 165-167 and S190; that span reads GRS.

This sequence belongs to the tetrahydrofolate dehydrogenase/cyclohydrolase family. As to quaternary structure, homodimer.

The enzyme catalyses (6R)-5,10-methylene-5,6,7,8-tetrahydrofolate + NADP(+) = (6R)-5,10-methenyltetrahydrofolate + NADPH. The catalysed reaction is (6R)-5,10-methenyltetrahydrofolate + H2O = (6R)-10-formyltetrahydrofolate + H(+). It participates in one-carbon metabolism; tetrahydrofolate interconversion. Functionally, catalyzes the oxidation of 5,10-methylenetetrahydrofolate to 5,10-methenyltetrahydrofolate and then the hydrolysis of 5,10-methenyltetrahydrofolate to 10-formyltetrahydrofolate. The protein is Bifunctional protein FolD of Burkholderia ambifaria (strain ATCC BAA-244 / DSM 16087 / CCUG 44356 / LMG 19182 / AMMD) (Burkholderia cepacia (strain AMMD)).